The primary structure comprises 550 residues: CTP synthase (550 aa).

Positions Met-1–Leu-266 are amidoligase domain. Residue Ser-14 coordinates CTP. Ser-14 lines the UTP pocket. ATP is bound by residues Ser-15–Ile-20 and Asp-72. Mg(2+) is bound by residues Asp-72 and Glu-140. Residues Asp-147 to Glu-149, Lys-187 to Gln-192, and Lys-223 each bind CTP. UTP-binding positions include Lys-187–Gln-192 and Lys-223. The region spanning Thr-291–Lys-546 is the Glutamine amidotransferase type-1 domain. Gly-353 serves as a coordination point for L-glutamine. Cys-380 serves as the catalytic Nucleophile; for glutamine hydrolysis. L-glutamine contacts are provided by residues Leu-381 to Gln-384, Glu-404, and Arg-474. Catalysis depends on residues His-519 and Glu-521.

This sequence belongs to the CTP synthase family. In terms of assembly, homotetramer.

The catalysed reaction is UTP + L-glutamine + ATP + H2O = CTP + L-glutamate + ADP + phosphate + 2 H(+). The enzyme catalyses L-glutamine + H2O = L-glutamate + NH4(+). It carries out the reaction UTP + NH4(+) + ATP = CTP + ADP + phosphate + 2 H(+). The protein operates within pyrimidine metabolism; CTP biosynthesis via de novo pathway; CTP from UDP: step 2/2. Its activity is regulated as follows. Allosterically activated by GTP, when glutamine is the substrate; GTP has no effect on the reaction when ammonia is the substrate. The allosteric effector GTP functions by stabilizing the protein conformation that binds the tetrahedral intermediate(s) formed during glutamine hydrolysis. Inhibited by the product CTP, via allosteric rather than competitive inhibition. In terms of biological role, catalyzes the ATP-dependent amination of UTP to CTP with either L-glutamine or ammonia as the source of nitrogen. Regulates intracellular CTP levels through interactions with the four ribonucleotide triphosphates. This chain is CTP synthase, found in Blochmanniella floridana.